Reading from the N-terminus, the 62-residue chain is Large ribosomal subunit protein uL30 (62 aa).

This sequence belongs to the universal ribosomal protein uL30 family. Part of the 50S ribosomal subunit.

This Nitrosospira multiformis (strain ATCC 25196 / NCIMB 11849 / C 71) protein is Large ribosomal subunit protein uL30.